Reading from the N-terminus, the 82-residue chain is Small ribosomal subunit protein bS16 (82 aa).

Belongs to the bacterial ribosomal protein bS16 family.

This chain is Small ribosomal subunit protein bS16, found in Cyanothece sp. (strain PCC 7425 / ATCC 29141).